The sequence spans 264 residues: Myozenin-2 (264 aa).

Omega-N-methylarginine is present on Arg53. The interval Gly90 to Pro135 is disordered. The residue at position 101 (Ser101) is a Phosphoserine. Pro residues predominate over residues Ser106–Pro120. Phosphothreonine is present on residues Thr107 and Thr111. At Ser116 the chain carries Phosphoserine.

Belongs to the myozenin family. Interacts via its C-terminus with spectrin repeats 3 and 4 of ACTN2. Interacts with ACTN1, LDB3, MYOT and PPP3CA. In terms of tissue distribution, expressed specifically in heart and skeletal muscle. In skeletal muscle, localized to the soleus and plantaris muscles, which are predominantly composed of slow-twitch fibers.

It is found in the cytoplasm. The protein resides in the myofibril. It localises to the sarcomere. Its subcellular location is the z line. Its function is as follows. Myozenins may serve as intracellular binding proteins involved in linking Z line proteins such as alpha-actinin, gamma-filamin, TCAP/telethonin, LDB3/ZASP and localizing calcineurin signaling to the sarcomere. Plays an important role in the modulation of calcineurin signaling. May play a role in myofibrillogenesis. In Mus musculus (Mouse), this protein is Myozenin-2.